Consider the following 209-residue polypeptide: MAENERMYISYNNIHKLCQGVAKHILARNERPDIIIAITGGGMIPARIIRSFLKTKGQKNIPIQAIGLSLYEDLGLDNSVETIGKEVIRTQWLDFGALNQHFDSLIGKKVLIVDEVDDTRTTLHYAVSELEKEIAEQQKVLNRMSEETVISIFVLHNKDKPKRAGLPDSMMNSGRYIAAQTVPDKWLCYPWDAEDIEEHTMLAKAQGHD.

Serine 79 bears the Phosphoserine mark.

The protein resides in the cytoplasm. Functionally, may act as a xanthine phosphoribosyltransferase involved in the synthesis of purine nucleotides. Such activity is however unclear in vivo. The chain is Xanthine phosphoribosyltransferase 1 (XPT1) from Saccharomyces cerevisiae (strain ATCC 204508 / S288c) (Baker's yeast).